A 91-amino-acid polypeptide reads, in one-letter code: DNA-binding protein HU-beta 2 (91 aa).

Belongs to the bacterial histone-like protein family.

Histone-like DNA-binding protein which is capable of wrapping DNA to stabilize it, and thus to prevent its denaturation under extreme environmental conditions. The sequence is that of DNA-binding protein HU-beta 2 (hupB2) from Neisseria meningitidis serogroup A / serotype 4A (strain DSM 15465 / Z2491).